Reading from the N-terminus, the 891-residue chain is Longitudinals lacking protein, isoform G (891 aa).

One can recognise a BTB domain in the interval Val-32 to Gln-97. Disordered regions lie at residues Leu-115–Leu-200 and Ser-228–Ser-340. Ser-140 carries the phosphoserine modification. Thr-161 is modified (phosphothreonine). Residues Ser-162 and Ser-168 each carry the phosphoserine modification. 4 stretches are compositionally biased toward low complexity: residues Ser-162–Pro-175, Ser-228–Thr-251, Thr-263–Ser-293, and Asn-329–Ser-340. Residues Ser-372, Ser-375, and Ser-378 each carry the phosphoserine modification. The tract at residues Gln-446–Ala-467 is disordered. Positions Gln-449–Thr-462 are enriched in basic and acidic residues. Phosphoserine is present on residues Ser-696 and Ser-705. Phosphothreonine is present on Thr-706. Residues Ser-749 and Ser-750 each carry the phosphoserine modification. The C2H2-type 1; degenerate zinc finger occupies Tyr-791–Glu-813. Residues His-821–His-843 form a C2H2-type 2 zinc finger. The segment at Val-840–Lys-891 is disordered. A Phosphoserine modification is found at Ser-874.

In terms of tissue distribution, expressed in both mesoderm and ectoderm with expression highest in the mesectoderm by stage 11. Becomes enriched in a cluster of brain cells, in abdominal histoblasts, and in the embryonic imaginal disks during later stages.

The protein localises to the nucleus. Its function is as follows. Putative transcription factor required for axon growth and guidance in the central and peripheral nervous systems. Repels CNS axons away from the midline by promoting the expression of the midline repellent sli and its receptor robo. This is Longitudinals lacking protein, isoform G from Drosophila melanogaster (Fruit fly).